Reading from the N-terminus, the 237-residue chain is Orotidine 5'-phosphate decarboxylase (237 aa).

Substrate is bound by residues Asp10, Lys33, 60-69, Thr124, Arg186, Gln195, Gly215, and Arg216; that span reads DLKLHDIPNT. Lys62 serves as the catalytic Proton donor.

Belongs to the OMP decarboxylase family. Type 1 subfamily. Homodimer.

It catalyses the reaction orotidine 5'-phosphate + H(+) = UMP + CO2. Its pathway is pyrimidine metabolism; UMP biosynthesis via de novo pathway; UMP from orotate: step 2/2. Its function is as follows. Catalyzes the decarboxylation of orotidine 5'-monophosphate (OMP) to uridine 5'-monophosphate (UMP). This chain is Orotidine 5'-phosphate decarboxylase, found in Lactiplantibacillus plantarum (strain ATCC BAA-793 / NCIMB 8826 / WCFS1) (Lactobacillus plantarum).